A 318-amino-acid chain; its full sequence is Bis(5'-nucleosyl)-tetraphosphatase, symmetrical (318 aa).

The segment at 269–318 is disordered; it reads PGREVTGPAPVARAPRRPRERLGRQRSRGNRGNAGNTAVPAKPQVDTPQD. The segment covering 282-297 has biased composition (basic residues); sequence APRRPRERLGRQRSRG.

Belongs to the Ap4A hydrolase family.

It catalyses the reaction P(1),P(4)-bis(5'-adenosyl) tetraphosphate + H2O = 2 ADP + 2 H(+). In terms of biological role, hydrolyzes diadenosine 5',5'''-P1,P4-tetraphosphate to yield ADP. The sequence is that of Bis(5'-nucleosyl)-tetraphosphatase, symmetrical from Xanthomonas oryzae pv. oryzae (strain KACC10331 / KXO85).